We begin with the raw amino-acid sequence, 1439 residues long: Mediator of RNA polymerase II transcription subunit 23 (1439 aa).

Positions 282-318 form a coiled coil; the sequence is SQMLNLQKHQKQRYNALEEQLVNLIVQAMEMTEANDA. The segment at 358–625 is interaction with Hsf; the sequence is HIVLALHEKL…HHVPTHYRVQ (268 aa). Disordered regions lie at residues 1338 to 1372 and 1401 to 1439; these read NDNT…QQQQ and SVPL…MRHN. Composition is skewed to low complexity over residues 1348–1372 and 1411–1439; these read SQTQ…QQQQ and QQQQ…MRHN.

The protein belongs to the Mediator complex subunit 23 family. As to quaternary structure, component of the Mediator complex. Interacts with Hsf.

It localises to the nucleus. Component of the Mediator complex, a coactivator involved in the regulated transcription of nearly all RNA polymerase II-dependent genes. Mediator functions as a bridge to convey information from gene-specific regulatory proteins to the basal RNA polymerase II transcription machinery. Mediator is recruited to promoters by direct interactions with regulatory proteins and serves as a scaffold for the assembly of a functional preinitiation complex with RNA polymerase II and the general transcription factors. Required for transcriptional activation in response to heat shock. This Drosophila melanogaster (Fruit fly) protein is Mediator of RNA polymerase II transcription subunit 23 (MED23).